The primary structure comprises 474 residues: tRNA-2-methylthio-N(6)-dimethylallyladenosine synthase (474 aa).

The MTTase N-terminal domain occupies lysine 3–glycine 120. [4Fe-4S] cluster is bound by residues cysteine 12, cysteine 49, cysteine 83, cysteine 157, cysteine 161, and cysteine 164. Residues arginine 143–alanine 375 enclose the Radical SAM core domain. The region spanning arginine 378 to arginine 441 is the TRAM domain.

Belongs to the methylthiotransferase family. MiaB subfamily. As to quaternary structure, monomer. [4Fe-4S] cluster is required as a cofactor.

The protein resides in the cytoplasm. The enzyme catalyses N(6)-dimethylallyladenosine(37) in tRNA + (sulfur carrier)-SH + AH2 + 2 S-adenosyl-L-methionine = 2-methylsulfanyl-N(6)-dimethylallyladenosine(37) in tRNA + (sulfur carrier)-H + 5'-deoxyadenosine + L-methionine + A + S-adenosyl-L-homocysteine + 2 H(+). Its function is as follows. Catalyzes the methylthiolation of N6-(dimethylallyl)adenosine (i(6)A), leading to the formation of 2-methylthio-N6-(dimethylallyl)adenosine (ms(2)i(6)A) at position 37 in tRNAs that read codons beginning with uridine. The chain is tRNA-2-methylthio-N(6)-dimethylallyladenosine synthase from Shigella boydii serotype 4 (strain Sb227).